Consider the following 468-residue polypeptide: MSSGKIAQVIGPVVDVLFAAGEKLPEINNALVVYKNDERKTKIVLEVALELGDGMVRTIAMESTDGLTRGMEVLDTGRPISVPVGKETLGRVFNVLGDTIDLEAPFTEDAERQPIHKKAPTFDELSTSSEILETGIKVIDLLAPYLKGGKVGLFGGAGVGKTVLIQELIHNIAQEHGGISVFTGVGERTREGNDLYWEMKESGVIEKTAMVFGQMNEPPGARMRVALTGLTIAEYFRDVEGQDVLLFIDNIFRFTQAGSEVSALLGRMPSAVGYQPTLATEMGQLQERITSTKKGSVTSIQAIYVPADDYTDPAPATAFAHLDSTTNLERKLVQLGIYPAVDPLASSSRALAPEIVGEEHYAVAAEVKRVLQRYHELQDIIAILGMDELSDEEKTLVARARRIQFFLSQNFNVAEQFTGQPGSYVPVAETVRGFKEILDGKYDHLPEDAFRGVGSIEDVIAKAEKMGF.

155–162 (GGAGVGKT) contributes to the ATP binding site.

This sequence belongs to the ATPase alpha/beta chains family. F-type ATPases have 2 components, CF(1) - the catalytic core - and CF(0) - the membrane proton channel. CF(1) has five subunits: alpha(3), beta(3), gamma(1), delta(1), epsilon(1). CF(0) has three main subunits: a(1), b(2) and c(9-12). The alpha and beta chains form an alternating ring which encloses part of the gamma chain. CF(1) is attached to CF(0) by a central stalk formed by the gamma and epsilon chains, while a peripheral stalk is formed by the delta and b chains.

The protein localises to the cell membrane. The enzyme catalyses ATP + H2O + 4 H(+)(in) = ADP + phosphate + 5 H(+)(out). Functionally, produces ATP from ADP in the presence of a proton gradient across the membrane. The catalytic sites are hosted primarily by the beta subunits. In Streptococcus pneumoniae (strain CGSP14), this protein is ATP synthase subunit beta.